The primary structure comprises 334 residues: Holliday junction branch migration complex subunit RuvB (334 aa).

A large ATPase domain (RuvB-L) region spans residues 1–181 (MSEFLTPERT…GIILELDFYT (181 aa)). ADP is bound by residues Leu19 and Arg20. ATP contacts are provided by Glu26, Phe27, and Ile28. The ADP site is built by Phe27, Ile28, Gly61, Leu62, Gly63, Lys64, Thr65, and Thr66. The ATP site is built by Leu62 and Gly63. ATP-binding positions include 127 to 129 (EDF) and Arg170. Residues Tyr180, Pro216, and Arg217 each contribute to the ADP site. The small ATPAse domain (RuvB-S) stretch occupies residues 182–255 (VKELKEIIKR…TMEVLNIDDE (74 aa)). Pro216 serves as a coordination point for ATP. A head domain (RuvB-H) region spans residues 256–334 (GLDEFDRKIL…KYEVPENRLF (79 aa)). Positions 309 and 314 each coordinate DNA.

Belongs to the RuvB family. Homohexamer. Forms an RuvA(8)-RuvB(12)-Holliday junction (HJ) complex. HJ DNA is sandwiched between 2 RuvA tetramers; dsDNA enters through RuvA and exits via RuvB. An RuvB hexamer assembles on each DNA strand where it exits the tetramer. Each RuvB hexamer is contacted by two RuvA subunits (via domain III) on 2 adjacent RuvB subunits; this complex drives branch migration. In the full resolvosome a probable DNA-RuvA(4)-RuvB(12)-RuvC(2) complex forms which resolves the HJ.

The protein localises to the cytoplasm. It catalyses the reaction ATP + H2O = ADP + phosphate + H(+). Functionally, the RuvA-RuvB-RuvC complex processes Holliday junction (HJ) DNA during genetic recombination and DNA repair, while the RuvA-RuvB complex plays an important role in the rescue of blocked DNA replication forks via replication fork reversal (RFR). RuvA specifically binds to HJ cruciform DNA, conferring on it an open structure. The RuvB hexamer acts as an ATP-dependent pump, pulling dsDNA into and through the RuvAB complex. RuvB forms 2 homohexamers on either side of HJ DNA bound by 1 or 2 RuvA tetramers; 4 subunits per hexamer contact DNA at a time. Coordinated motions by a converter formed by DNA-disengaged RuvB subunits stimulates ATP hydrolysis and nucleotide exchange. Immobilization of the converter enables RuvB to convert the ATP-contained energy into a lever motion, pulling 2 nucleotides of DNA out of the RuvA tetramer per ATP hydrolyzed, thus driving DNA branch migration. The RuvB motors rotate together with the DNA substrate, which together with the progressing nucleotide cycle form the mechanistic basis for DNA recombination by continuous HJ branch migration. Branch migration allows RuvC to scan DNA until it finds its consensus sequence, where it cleaves and resolves cruciform DNA. In terms of biological role, promotes Holliday junction (HJ) branch migration in conjunction with RuvA. Subunits can be free, ADP- or ATP-bound; nucleotide binding changes during the reaction cycle. Has a DNA-dependent ATPase activity; dsDNA and supercoiled DNA but not ssDNA stimulate activity. This chain is Holliday junction branch migration complex subunit RuvB, found in Thermotoga maritima (strain ATCC 43589 / DSM 3109 / JCM 10099 / NBRC 100826 / MSB8).